The following is a 116-amino-acid chain: Putative pterin-4-alpha-carbinolamine dehydratase (116 aa).

This sequence belongs to the pterin-4-alpha-carbinolamine dehydratase family.

The enzyme catalyses (4aS,6R)-4a-hydroxy-L-erythro-5,6,7,8-tetrahydrobiopterin = (6R)-L-erythro-6,7-dihydrobiopterin + H2O. This Microcystis aeruginosa (strain NIES-843 / IAM M-2473) protein is Putative pterin-4-alpha-carbinolamine dehydratase.